The following is a 134-amino-acid chain: Putative membrane protein insertion efficiency factor (134 aa).

The protein belongs to the UPF0161 family.

The protein resides in the cell inner membrane. Could be involved in insertion of integral membrane proteins into the membrane. The polypeptide is Putative membrane protein insertion efficiency factor (Rhizobium etli (strain ATCC 51251 / DSM 11541 / JCM 21823 / NBRC 15573 / CFN 42)).